The sequence spans 574 residues: Proline--tRNA ligase (574 aa).

It belongs to the class-II aminoacyl-tRNA synthetase family. ProS type 1 subfamily. Homodimer.

The protein resides in the cytoplasm. It carries out the reaction tRNA(Pro) + L-proline + ATP = L-prolyl-tRNA(Pro) + AMP + diphosphate. In terms of biological role, catalyzes the attachment of proline to tRNA(Pro) in a two-step reaction: proline is first activated by ATP to form Pro-AMP and then transferred to the acceptor end of tRNA(Pro). As ProRS can inadvertently accommodate and process non-cognate amino acids such as alanine and cysteine, to avoid such errors it has two additional distinct editing activities against alanine. One activity is designated as 'pretransfer' editing and involves the tRNA(Pro)-independent hydrolysis of activated Ala-AMP. The other activity is designated 'posttransfer' editing and involves deacylation of mischarged Ala-tRNA(Pro). The misacylated Cys-tRNA(Pro) is not edited by ProRS. The chain is Proline--tRNA ligase from Sodalis glossinidius (strain morsitans).